Reading from the N-terminus, the 395-residue chain is S-adenosylmethionine synthase (395 aa).

Residue H12 coordinates ATP. Position 14 (D14) interacts with Mg(2+). E40 provides a ligand contact to K(+). Positions 53 and 96 each coordinate L-methionine. Residues 96-106 (QSKEIADAVNF) are flexible loop. ATP-binding positions include 174–176 (DGK), 242–243 (RF), D251, 257–258 (RK), A274, and K278. An L-methionine-binding site is contributed by D251. K282 contributes to the L-methionine binding site.

The protein belongs to the AdoMet synthase family. As to quaternary structure, homotetramer; dimer of dimers. Mg(2+) serves as cofactor. K(+) is required as a cofactor.

Its subcellular location is the cytoplasm. It catalyses the reaction L-methionine + ATP + H2O = S-adenosyl-L-methionine + phosphate + diphosphate. It functions in the pathway amino-acid biosynthesis; S-adenosyl-L-methionine biosynthesis; S-adenosyl-L-methionine from L-methionine: step 1/1. In terms of biological role, catalyzes the formation of S-adenosylmethionine (AdoMet) from methionine and ATP. The overall synthetic reaction is composed of two sequential steps, AdoMet formation and the subsequent tripolyphosphate hydrolysis which occurs prior to release of AdoMet from the enzyme. The polypeptide is S-adenosylmethionine synthase (Tropheryma whipplei (strain Twist) (Whipple's bacillus)).